A 290-amino-acid polypeptide reads, in one-letter code: ATP synthase gamma chain (290 aa).

It belongs to the ATPase gamma chain family. F-type ATPases have 2 components, CF(1) - the catalytic core - and CF(0) - the membrane proton channel. CF(1) has five subunits: alpha(3), beta(3), gamma(1), delta(1), epsilon(1). CF(0) has three main subunits: a, b and c.

The protein resides in the cell membrane. Produces ATP from ADP in the presence of a proton gradient across the membrane. The gamma chain is believed to be important in regulating ATPase activity and the flow of protons through the CF(0) complex. This is ATP synthase gamma chain from Roseiflexus sp. (strain RS-1).